The primary structure comprises 79 residues: Acyl carrier protein (79 aa).

Residues 2-77 form the Carrier domain; it reads ADHASKIKDI…DAVAYLEAKV (76 aa). Position 37 is an O-(pantetheine 4'-phosphoryl)serine (Ser37).

Belongs to the acyl carrier protein (ACP) family. In terms of processing, 4'-phosphopantetheine is transferred from CoA to a specific serine of apo-ACP by AcpS. This modification is essential for activity because fatty acids are bound in thioester linkage to the sulfhydryl of the prosthetic group.

It localises to the cytoplasm. It participates in lipid metabolism; fatty acid biosynthesis. Carrier of the growing fatty acid chain in fatty acid biosynthesis. This Gemmatimonas aurantiaca (strain DSM 14586 / JCM 11422 / NBRC 100505 / T-27) protein is Acyl carrier protein.